The following is a 309-amino-acid chain: NAD kinase (309 aa).

The active-site Proton acceptor is Asp-89. Residues 89–90 (DG), 163–164 (NE), His-174, Arg-191, Asp-193, and 204–209 (TAYALS) contribute to the NAD(+) site.

Belongs to the NAD kinase family. A divalent metal cation is required as a cofactor.

The protein localises to the cytoplasm. It catalyses the reaction NAD(+) + ATP = ADP + NADP(+) + H(+). In terms of biological role, involved in the regulation of the intracellular balance of NAD and NADP, and is a key enzyme in the biosynthesis of NADP. Catalyzes specifically the phosphorylation on 2'-hydroxyl of the adenosine moiety of NAD to yield NADP. The polypeptide is NAD kinase (Shewanella baltica (strain OS155 / ATCC BAA-1091)).